The sequence spans 151 residues: Putative olfactory receptor 13C6 (151 aa).

Topologically, residues 1-27 are extracellular; the sequence is MVSANQTASVTEFILLGLSAHPKLEKT. N-linked (GlcNAc...) asparagine glycosylation is present at Asn-5. Residues 28–48 traverse the membrane as a helical segment; sequence FFVLILLMYLVILLGNGVLIL. At 49 to 61 the chain is on the cytoplasmic side; sequence MTVSNSHLHMPMY. A helical membrane pass occupies residues 62–82; the sequence is FFLGNLSFLDICYTTSSVPLI. Topologically, residues 83–100 are extracellular; it reads LDSFLTPRKTISFSACAV. Residues 101–121 traverse the membrane as a helical segment; sequence QMFLSFAMGATECVLLSMMAF.

It belongs to the G-protein coupled receptor 1 family.

Its subcellular location is the cell membrane. In terms of biological role, odorant receptor. The protein is Putative olfactory receptor 13C6 of Homo sapiens (Human).